Reading from the N-terminus, the 643-residue chain is Probable extracellular metalloproteinase 4 (643 aa).

The N-terminal stretch at 1–18 (MHGLLLAGLLALPLNVLA) is a signal peptide. A propeptide spanning residues 19-254 (HPTESHSSGV…VHSVVDYVSA (236 aa)) is cleaved from the precursor. Residues 47–57 (TKSDAVPKQDG) show a composition bias toward basic and acidic residues. The tract at residues 47 to 69 (TKSDAVPKQDGESFTTSSTGDDN) is disordered. Over residues 58–69 (ESFTTSSTGDDN) the composition is skewed to polar residues. 2 N-linked (GlcNAc...) asparagine glycosylation sites follow: N271 and N420. H437 contacts Zn(2+). E438 is a catalytic residue. Zn(2+) is bound at residue H441. N-linked (GlcNAc...) asparagine glycosylation is found at N603 and N629.

The protein belongs to the peptidase M36 family. The cofactor is Zn(2+).

Its subcellular location is the secreted. In terms of biological role, secreted metalloproteinase probably acting as a virulence factor. The sequence is that of Probable extracellular metalloproteinase 4 (MEP4) from Arthroderma benhamiae (strain ATCC MYA-4681 / CBS 112371) (Trichophyton mentagrophytes).